The sequence spans 120 residues: Protein crumbs homolog 3 (120 aa).

The N-terminal stretch at 1–26 is a signal peptide; it reads MANPGLGLLLALGLPFLLARWGRAWG. Residues 27-59 are Extracellular-facing; the sequence is QIQTTSANENSTVLPSSTSSSSDGNLRPEAITA. The N-linked (GlcNAc...) asparagine glycan is linked to Asn36. A helical transmembrane segment spans residues 60-80; sequence IIVVFSLLAALLLAVGLALLV. Residues 81 to 120 lie on the Cytoplasmic side of the membrane; the sequence is RKLREKRQTEGTYRPSSEEQVGARVPPTPNLKLPPEERLI. The segment at 84 to 120 is interaction with EPB41L5; sequence REKRQTEGTYRPSSEEQVGARVPPTPNLKLPPEERLI. The interval 87–120 is disordered; that stretch reads RQTEGTYRPSSEEQVGARVPPTPNLKLPPEERLI. The segment covering 90–99 has biased composition (polar residues); that stretch reads EGTYRPSSEE. A PDZ-binding motif is present at residues 117-120; the sequence is ERLI.

Component of a complex composed of CRB3, PALS1 and PATJ. Interacts (via C-terminus) with PALS1 (via PDZ domain). Interacts with PARD6A. Interacts (via intracellular domain) with EPB41L5. Interacts with WDR83. Preferentially expressed in epithelial tissues. Expressed at high levels in lung, kidney, and colon. Expressed at high levels in retina, colon and mammary glands. Moderately expressed in liver, spleen, pancreas and prostate. Moderately to weakly expressed in the placenta. Weakly expressed in skeletal muscle and small intestine.

It is found in the apical cell membrane. The protein localises to the cell junction. Its subcellular location is the tight junction. Involved in the establishment of cell polarity in mammalian epithelial cells. Regulates the morphogenesis of tight junctions. Involved in promoting phosphorylation and cytoplasmic retention of transcriptional coactivators YAP1 and WWTR1/TAZ which leads to suppression of TGFB1-dependent transcription of target genes such as CCN2/CTGF, SERPINE1/PAI1, SNAI1/SNAIL1 and SMAD7. This Homo sapiens (Human) protein is Protein crumbs homolog 3.